The primary structure comprises 302 residues: Sulfate adenylyltransferase subunit 2 (302 aa).

Belongs to the PAPS reductase family. CysD subfamily. Heterodimer composed of CysD, the smaller subunit, and CysN.

It carries out the reaction sulfate + ATP + H(+) = adenosine 5'-phosphosulfate + diphosphate. Its pathway is sulfur metabolism; hydrogen sulfide biosynthesis; sulfite from sulfate: step 1/3. Its function is as follows. With CysN forms the ATP sulfurylase (ATPS) that catalyzes the adenylation of sulfate producing adenosine 5'-phosphosulfate (APS) and diphosphate, the first enzymatic step in sulfur assimilation pathway. APS synthesis involves the formation of a high-energy phosphoric-sulfuric acid anhydride bond driven by GTP hydrolysis by CysN coupled to ATP hydrolysis by CysD. This is Sulfate adenylyltransferase subunit 2 from Aeromonas hydrophila subsp. hydrophila (strain ATCC 7966 / DSM 30187 / BCRC 13018 / CCUG 14551 / JCM 1027 / KCTC 2358 / NCIMB 9240 / NCTC 8049).